The sequence spans 225 residues: UPF0758 protein XOO0462 (225 aa).

One can recognise an MPN domain in the interval 102 to 224 (ALSDPPSVGR…PVSLAERGWL (123 aa)). Zn(2+) contacts are provided by His-173, His-175, and Asp-186. The JAMM motif motif lies at 173 to 186 (HNHPSGNPEPSEAD).

Belongs to the UPF0758 family.

The chain is UPF0758 protein XOO0462 from Xanthomonas oryzae pv. oryzae (strain MAFF 311018).